A 220-amino-acid polypeptide reads, in one-letter code: Deoxyribose-phosphate aldolase (220 aa).

Asp89 acts as the Proton donor/acceptor in catalysis. Lys151 functions as the Schiff-base intermediate with acetaldehyde in the catalytic mechanism. Catalysis depends on Lys180, which acts as the Proton donor/acceptor.

The protein belongs to the DeoC/FbaB aldolase family. DeoC type 1 subfamily.

It is found in the cytoplasm. It catalyses the reaction 2-deoxy-D-ribose 5-phosphate = D-glyceraldehyde 3-phosphate + acetaldehyde. It functions in the pathway carbohydrate degradation; 2-deoxy-D-ribose 1-phosphate degradation; D-glyceraldehyde 3-phosphate and acetaldehyde from 2-deoxy-alpha-D-ribose 1-phosphate: step 2/2. Catalyzes a reversible aldol reaction between acetaldehyde and D-glyceraldehyde 3-phosphate to generate 2-deoxy-D-ribose 5-phosphate. This Streptococcus sanguinis (strain SK36) protein is Deoxyribose-phosphate aldolase.